The primary structure comprises 353 residues: UPF0283 membrane protein YcjF (353 aa).

The segment covering 1–19 has biased composition (basic and acidic residues); sequence MSEPLKPRIDFAEPLKEEP. A disordered region spans residues 1–35; sequence MSEPLKPRIDFAEPLKEEPTSAFKAQQTFSEAESR. 3 helical membrane passes run 70-90, 100-120, and 213-233; these read MVMG…VQWT, VALG…GSVV, and ESTL…FIAW.

It belongs to the UPF0283 family.

It localises to the cell inner membrane. The chain is UPF0283 membrane protein YcjF from Salmonella newport (strain SL254).